The primary structure comprises 350 residues: FAD:protein FMN transferase (350 aa).

Residues 1-19 (MKMTFCRAVCLAAAFLLMG) form the signal peptide. C20 carries the N-palmitoyl cysteine lipid modification. The S-diacylglycerol cysteine moiety is linked to residue C20. FAD-binding positions include M41, Y78, 119–121 (AMD), and D181. Residue T184 participates in Mg(2+) binding. E187 and I272 together coordinate FAD. Mg(2+) contacts are provided by D298, D301, and T302.

This sequence belongs to the ApbE family. Homodimer. Mg(2+) is required as a cofactor.

It is found in the cell inner membrane. It catalyses the reaction L-threonyl-[protein] + FAD = FMN-L-threonyl-[protein] + AMP + H(+). Flavin transferase that catalyzes the transfer of the FMN moiety of FAD and its covalent binding to the hydroxyl group of a threonine residue in a target flavoprotein such as NqrB and NqrC, two subunits of the NQR complex. The protein is FAD:protein FMN transferase of Salmonella typhimurium (strain LT2 / SGSC1412 / ATCC 700720).